Reading from the N-terminus, the 386-residue chain is Methylthioribose-1-phosphate isomerase (386 aa).

The active-site Proton donor is Asp-261.

The protein belongs to the eIF-2B alpha/beta/delta subunits family. MtnA subfamily.

The protein resides in the cytoplasm. It localises to the nucleus. It carries out the reaction 5-(methylsulfanyl)-alpha-D-ribose 1-phosphate = 5-(methylsulfanyl)-D-ribulose 1-phosphate. The protein operates within amino-acid biosynthesis; L-methionine biosynthesis via salvage pathway; L-methionine from S-methyl-5-thio-alpha-D-ribose 1-phosphate: step 1/6. Catalyzes the interconversion of methylthioribose-1-phosphate (MTR-1-P) into methylthioribulose-1-phosphate (MTRu-1-P). This Paracoccidioides brasiliensis (strain Pb03) protein is Methylthioribose-1-phosphate isomerase.